The following is a 212-amino-acid chain: Noggin-2 (212 aa).

The N-terminal stretch at 1 to 23 (MGSITRALPLLLLLLLCAHGTAS) is a signal peptide. Positions 37-56 (LPVPDLIENPDPEHDPREQD) are disordered. Residues 47 to 56 (DPEHDPREQD) are compositionally biased toward basic and acidic residues. The N-linked (GlcNAc...) asparagine glycan is linked to Asn-84.

The protein belongs to the noggin family. In terms of assembly, homodimer; disulfide-linked.

The protein resides in the secreted. In terms of biological role, inhibitor of bone morphogenetic proteins (BMP) signaling. In Danio rerio (Zebrafish), this protein is Noggin-2 (nog2).